The sequence spans 319 residues: Lipooligosaccharide heptosyltransferase 2 (319 aa).

Belongs to the glycosyltransferase 9 family.

It catalyses the reaction an L-alpha-D-Hep-(1-&gt;5)-[alpha-Kdo-(2-&gt;4)]-alpha-Kdo-(2-&gt;6)-lipid A + ADP-L-glycero-beta-D-manno-heptose = an L-alpha-D-Hep-(1-&gt;3)-L-alpha-D-Hep-(1-&gt;5)-[alpha-Kdo-(2-&gt;4)]-alpha-Kdo-(2-&gt;6)-lipid A + ADP + H(+). It participates in bacterial outer membrane biogenesis; LOS core biosynthesis. In terms of biological role, glycosyltransferase involved in the biosynthesis of the core oligosaccharide region of lipooligosaccharide (LOS). Catalyzes the addition of the second heptose unit to the heptosyl-Kdo2-lipid A module. This Campylobacter jejuni subsp. jejuni serotype O:2 (strain ATCC 700819 / NCTC 11168) protein is Lipooligosaccharide heptosyltransferase 2.